The primary structure comprises 96 residues: Co-chaperonin GroES (96 aa).

The protein belongs to the GroES chaperonin family. In terms of assembly, heptamer of 7 subunits arranged in a ring. Interacts with the chaperonin GroEL.

The protein localises to the cytoplasm. In terms of biological role, together with the chaperonin GroEL, plays an essential role in assisting protein folding. The GroEL-GroES system forms a nano-cage that allows encapsulation of the non-native substrate proteins and provides a physical environment optimized to promote and accelerate protein folding. GroES binds to the apical surface of the GroEL ring, thereby capping the opening of the GroEL channel. The protein is Co-chaperonin GroES of Polynucleobacter necessarius subsp. necessarius (strain STIR1).